A 1019-amino-acid chain; its full sequence is Insulin-degrading enzyme (1019 aa).

Position 108 (H108) interacts with Zn(2+). The active-site Proton acceptor is E111. Positions 112 and 189 each coordinate Zn(2+). K192 is modified (N6-succinyllysine). Residues 336-342 and 359-363 each bind substrate; these read HLIGHEG and LVGGQ. ATP is bound at residue R429. K697 carries the post-translational modification N6-succinyllysine. The SlyX motif signature appears at 853 to 858; sequence EKPPHY. 895–901 contributes to the ATP binding site; sequence DKPKKLS.

This sequence belongs to the peptidase M16 family. In terms of assembly, homodimer. Can also form homotetramers. (Microbial infection) Interacts (via N-terminus) with varicella-zoster virus (VZV) envelope glycoprotein E (via N-terminus); the membrane-associated isoform may function as an entry receptor for this virus. Zn(2+) is required as a cofactor. Post-translationally, the N-terminus is blocked. Detected in brain and in cerebrospinal fluid (at protein level).

The protein localises to the cytoplasm. It localises to the cytosol. The protein resides in the cell membrane. It is found in the secreted. The enzyme catalyses Degradation of insulin, glucagon and other polypeptides. No action on proteins.. Activated by small peptides. Activated by ATP and GTP, and to a lesser extent by CTP, TTP and PPPi. Inhibited by bacitracin. In vitro modification of Cys residues impairs enzyme activity. Plays a role in the cellular breakdown of insulin, APP peptides, IAPP peptides, natriuretic peptides, glucagon, bradykinin, kallidin, and other peptides, and thereby plays a role in intercellular peptide signaling. Substrate binding induces important conformation changes, making it possible to bind and degrade larger substrates, such as insulin. Contributes to the regulation of peptide hormone signaling cascades and regulation of blood glucose homeostasis via its role in the degradation of insulin, glucagon and IAPP. Plays a role in the degradation and clearance of APP-derived amyloidogenic peptides that are secreted by neurons and microglia. Degrades the natriuretic peptides ANP, BNP and CNP, inactivating their ability to raise intracellular cGMP. Also degrades an aberrant frameshifted 40-residue form of NPPA (fsNPPA) which is associated with familial atrial fibrillation in heterozygous patients. Involved in antigen processing. Produces both the N terminus and the C terminus of MAGEA3-derived antigenic peptide (EVDPIGHLY) that is presented to cytotoxic T lymphocytes by MHC class I. Functionally, (Microbial infection) The membrane-associated isoform acts as an entry receptor for varicella-zoster virus (VZV). In Homo sapiens (Human), this protein is Insulin-degrading enzyme.